The following is a 1439-amino-acid chain: Microtubule organization protein AKNA (1439 aa).

2 stretches are compositionally biased toward basic and acidic residues: residues 1–10 (MASSETEIRW) and 25–35 (AWAEDKRDVDR). Positions 1–394 (MASSETEIRW…NRKPQAPARP (394 aa)) are disordered. At serine 52 the chain carries Phosphoserine. Residues 71-83 (WDPHPQPDGHQDS) are compositionally biased toward basic and acidic residues. Positions 89–99 (SGEEAEAEDVD) are enriched in acidic residues. Residues 263-275 (QDSSAPPAQSPQH) are compositionally biased toward polar residues. A compositionally biased stretch (basic and acidic residues) spans 276–285 (ATDRWRRETT). 3 positions are modified to phosphoserine: serine 316, serine 499, and serine 534. Disordered regions lie at residues 507–562 (SAEW…SAEQ) and 659–682 (IDQT…PALP). Residues 533 to 544 (LSPSSLTSMPTL) show a composition bias toward low complexity. Phosphoserine occurs at positions 767 and 770. The PEST stretch occupies residues 771 to 804 (LPEAMRMEEEEEGEEEEEEEGGGDSLEVDGVAAT). Disordered regions lie at residues 775–942 (MRME…QTPE) and 977–1005 (IPRR…LRQR). The segment covering 778–792 (EEEEEGEEEEEEEGG) has biased composition (acidic residues). Serine 848 bears the Phosphoserine mark. Positions 865 to 875 (PPGPGVPPHPP) are enriched in pro residues. Composition is skewed to polar residues over residues 879 to 891 (SAAS…TSLE), 929 to 940 (SETSRVSPLTQT), and 983 to 999 (EPST…SSPS). Position 886 is a phosphoserine (serine 886). A PEST region spans residues 911–932 (HLEETWMASPETDSGFVGSETS). A phosphoserine mark is found at serine 997 and serine 1010. Positions 1095–1165 (LHQPLQGSPT…RARSSSVPRE (71 aa)) are disordered. Positions 1115–1123 (RTRGRPADS) form a DNA-binding region, a.T hook. Over residues 1135–1147 (STERLPGEPRGEE) the composition is skewed to basic and acidic residues. A phosphoserine mark is found at serine 1172 and serine 1173. Residues 1180-1211 (LPLFSEKSKTTKDSPQAARDGKRGVGSAGWPD) are disordered. A Phosphoserine modification is found at serine 1228. The segment at 1252–1329 (AGGAVTGDPL…RPPPGLWYLA (78 aa)) is disordered. Positions 1303–1317 (SSTPSPKQRSKQAGS) are enriched in polar residues. Residues serine 1377, serine 1387, and serine 1424 each carry the phosphoserine modification.

The protein belongs to the AKNA family. In terms of assembly, interacts with DCTN1. Interacts with MAPRE1/EB1. Interacts with ODF2. Interacts with CAMSAP3. Phosphorylated; phosphorylation regulates dissociation from and reassembly at the centrosome. In terms of tissue distribution, predominantly expressed by lymphoid tissues. Highly expressed in the spleen, lymph nodes and peripheral blood leukocytes, expressed at lower level in the thymus. Mainly expressed by germinal center B-lymphocytes, a stage in which receptor and ligand interactions are crucial for B-lymphocyte maturation. Expressed by B- and T-lymphocytes, Natural killer cells and CD1a(+)CD14(-) but not CD1a(-)CD14(+) dendritic cells. Weakly or not expressed in fetal liver and in adult bone marrow.

The protein localises to the cytoplasm. The protein resides in the cytoskeleton. It localises to the microtubule organizing center. Its subcellular location is the centrosome. It is found in the centriole. The protein localises to the nucleus. Functionally, centrosomal protein that plays a key role in cell delamination by regulating microtubule organization. Required for the delamination and retention of neural stem cells from the subventricular zone during neurogenesis. Also regulates the epithelial-to-mesenchymal transition in other epithelial cells. Acts by increasing centrosomal microtubule nucleation and recruiting nucleation factors and minus-end stabilizers, thereby destabilizing microtubules at the adherens junctions and mediating constriction of the apical endfoot. In addition, may also act as a transcription factor that specifically activates the expression of the CD40 receptor and its ligand CD40L/CD154, two cell surface molecules on lymphocytes that are critical for antigen-dependent-B-cell development. Binds to A/T-rich promoters. It is unclear how it can both act as a microtubule organizer and as a transcription factor; additional evidences are required to reconcile these two apparently contradictory functions. The sequence is that of Microtubule organization protein AKNA from Homo sapiens (Human).